The chain runs to 325 residues: uncharacterized protein (325 aa).

Coiled-coil stretches lie at residues 38–69 and 201–229; these read VHVA…QNQS and ANTD…LEFK.

This is an uncharacterized protein from Acanthamoeba polyphaga (Amoeba).